The primary structure comprises 646 residues: Macrolide export ATP-binding/permease protein MacB (646 aa).

In terms of domain architecture, ABC transporter spans 7 to 245 (IRLEDICKTF…EATLQPHEEI (239 aa)). 43-50 (GASGSGKS) provides a ligand contact to ATP. 4 consecutive transmembrane segments (helical) span residues 274-294 (VLTL…LAIG), 528-548 (VAAI…LVSV), 572-592 (FIIE…ILGL), and 609-629 (FGPV…FGFL).

This sequence belongs to the ABC transporter superfamily. Macrolide exporter (TC 3.A.1.122) family. In terms of assembly, homodimer.

Its subcellular location is the cell inner membrane. In terms of biological role, non-canonical ABC transporter that contains transmembrane domains (TMD), which form a pore in the inner membrane, and an ATP-binding domain (NBD), which is responsible for energy generation. Confers resistance against macrolides. The sequence is that of Macrolide export ATP-binding/permease protein MacB from Brucella abortus (strain 2308).